We begin with the raw amino-acid sequence, 826 residues long: Copper-transporting ATPase 1 (826 aa).

2 HMA domains span residues 15-80 and 82-147; these read APTD…YEPK and IIQE…YDVR. Cu cation is bound by residues cysteine 26, cysteine 29, cysteine 93, and cysteine 96. The next 6 membrane-spanning stretches (helical) occupy residues 172–192, 209–229, 246–266, 270–290, 429–449, and 457–477; these read LVIL…GSHF, NLYI…LRFF, LVVL…FASG, SGTA…ILLG, AWFV…WYVF, and FALV…MGLA. The 4-aspartylphosphate intermediate role is filled by aspartate 514. 2 residues coordinate Mg(2+): aspartate 713 and aspartate 717. 2 helical membrane-spanning segments follow: residues 772–792 and 795–815; these read FWAF…LYPL and TLLS…FVLG.

It belongs to the cation transport ATPase (P-type) (TC 3.A.3) family. Type IB subfamily.

The protein localises to the cell membrane. It catalyses the reaction Cu(2+)(in) + ATP + H2O = Cu(2+)(out) + ADP + phosphate + H(+). In terms of biological role, involved in copper transport. In Rhizobium meliloti (strain 1021) (Ensifer meliloti), this protein is Copper-transporting ATPase 1 (actP1).